Reading from the N-terminus, the 196-residue chain is Heat shock protein beta-8 (196 aa).

A disordered region spans residues 1 to 28 (MADGQLPFPCSYPSRLRRDPFRDSPLSS). Phosphoserine occurs at positions 24 and 57. Position 63 is a phosphothreonine (Thr63). Residues Arg71 and Arg78 each carry the asymmetric dimethylarginine modification. The sHSP domain occupies 78 to 185 (RFGVPAEGRS…PFGESSFNNE (108 aa)). Phosphoserine is present on Ser87. Residues 176-196 (PFGESSFNNELPQDNQEVTCS) are disordered. Residues 178–196 (GESSFNNELPQDNQEVTCS) are compositionally biased toward polar residues.

The protein belongs to the small heat shock protein (HSP20) family. Monomer. Forms a ternary complex with BAG3 and HSPA1A. Component of the chaperone-assisted selective autophagy (CASA) complex consisting of BAG3, HSPA8/HSC70, HSPB8 and STUB1/CHIP. Interacts with HSPB1. Interacts with DNAJB6. Interacts with BAG3. Highly expressed in skeletal muscle, heart, uterus, liver, lung and ovary. Low levels found in stomach and brain. Not detected in small intestine, large intestine, kidney, spleen and testis. In the ovary, expression is concentrated in the endometrium and in the connective tissue between the circular and longitudinal muscles of the myometrium.

The protein localises to the cytoplasm. The protein resides in the nucleus. Involved in the chaperone-assisted selective autophagy (CASA), a crucial process for protein quality control, particularly in mechanical strained cells and tissues such as muscle. Displays temperature-dependent chaperone activity. The polypeptide is Heat shock protein beta-8 (Hspb8) (Mus musculus (Mouse)).